Here is a 36-residue protein sequence, read N- to C-terminus: Phospholipase A2 hemilipin-2 (36 aa).

The protein belongs to the phospholipase A2 family. Group III subfamily. In terms of assembly, heterodimer composed of a small subunit and a large subunit; disulfid-linked. Ca(2+) serves as cofactor. As to expression, expressed by the venom gland.

Its subcellular location is the secreted. The enzyme catalyses a 1,2-diacyl-sn-glycero-3-phosphocholine + H2O = a 1-acyl-sn-glycero-3-phosphocholine + a fatty acid + H(+). Functionally, scorpion venom phospholipase A2 (PLA2) that impacts angiogenesis in vitro and in vivo without showing any cytotoxic or apoptotic signs. The antiangiogenic effect is independent from the catalytic activity and seems to be held by its small subunit. PLA2 catalyzes the calcium-dependent hydrolysis of the 2-acyl groups in 3-sn-phosphoglycerides. This chain is Phospholipase A2 hemilipin-2, found in Hemiscorpius lepturus (Scorpion).